A 209-amino-acid chain; its full sequence is ATP-dependent dethiobiotin synthetase BioD (209 aa).

13–18 (DVGKTV) contacts ATP. Position 17 (T17) interacts with Mg(2+). Residue K33 is part of the active site. E100 is a Mg(2+) binding site. ATP is bound by residues 100–103 (EGAG) and 184–186 (PRL).

The protein belongs to the dethiobiotin synthetase family. As to quaternary structure, homodimer. Requires Mg(2+) as cofactor.

The protein localises to the cytoplasm. It catalyses the reaction (7R,8S)-7,8-diammoniononanoate + CO2 + ATP = (4R,5S)-dethiobiotin + ADP + phosphate + 3 H(+). The protein operates within cofactor biosynthesis; biotin biosynthesis; biotin from 7,8-diaminononanoate: step 1/2. Catalyzes a mechanistically unusual reaction, the ATP-dependent insertion of CO2 between the N7 and N8 nitrogen atoms of 7,8-diaminopelargonic acid (DAPA, also called 7,8-diammoniononanoate) to form a ureido ring. In Rhizorhabdus wittichii (strain DSM 6014 / CCUG 31198 / JCM 15750 / NBRC 105917 / EY 4224 / RW1) (Sphingomonas wittichii), this protein is ATP-dependent dethiobiotin synthetase BioD.